Here is a 368-residue protein sequence, read N- to C-terminus: tRNA(Met) cytidine acetate ligase (368 aa).

ATP is bound by residues 7 to 20, G96, N152, and R175; that span reads IAEF…HKYL.

This sequence belongs to the TmcAL family.

The protein resides in the cytoplasm. The catalysed reaction is cytidine(34) in elongator tRNA(Met) + acetate + ATP = N(4)-acetylcytidine(34) in elongator tRNA(Met) + AMP + diphosphate. In terms of biological role, catalyzes the formation of N(4)-acetylcytidine (ac(4)C) at the wobble position of elongator tRNA(Met), using acetate and ATP as substrates. First activates an acetate ion to form acetyladenylate (Ac-AMP) and then transfers the acetyl group to tRNA to form ac(4)C34. In Streptococcus pyogenes serotype M49 (strain NZ131), this protein is tRNA(Met) cytidine acetate ligase.